Reading from the N-terminus, the 189-residue chain is MASGSNWLSGVNVVLVMAYGSLVFVLLFIFVKRQIMRFAMKSRRGPHVPVGHNAPKDLKEEIDIRLSRVQDIKYEPQLLADDDARLLQLETQGNQSCYNYLYRMKALDAIRTSEIPFHSEGRHPRSLMGKNFRSYLLDLRNTSTPFKGVRKALIDTLLDGYETARYGTGVFGQNEYLRYQEALSELATA.

A helical membrane pass occupies residues 11 to 31 (VNVVLVMAYGSLVFVLLFIFV).

The protein localises to the membrane. It localises to the golgi apparatus. The protein resides in the mitochondrion. In terms of biological role, general regulator of phagocytosis. Required to uptake Gram negative bacterium by macrophages. The chain is Protein C1orf43 homolog from Pongo abelii (Sumatran orangutan).